A 241-amino-acid polypeptide reads, in one-letter code: Large ribosomal subunit protein uL3 (241 aa).

2 disordered regions span residues 139–164 (VSHR…KMPG) and 215–241 (DAPK…QEGA). Residue Q151 is modified to N5-methylglutamine.

The protein belongs to the universal ribosomal protein uL3 family. Part of the 50S ribosomal subunit. Forms a cluster with proteins L14 and L19. In terms of processing, methylated by PrmB.

Its function is as follows. One of the primary rRNA binding proteins, it binds directly near the 3'-end of the 23S rRNA, where it nucleates assembly of the 50S subunit. This chain is Large ribosomal subunit protein uL3, found in Rhodopseudomonas palustris (strain BisB5).